The following is a 155-amino-acid chain: UPF0461 protein C5orf24 homolog (155 aa).

Residues 1 to 10 (MMHPVASSNP) show a composition bias toward polar residues. Residues 1–20 (MMHPVASSNPAFCGPGKPSC) are disordered. S37 carries the phosphoserine modification. The interval 40–155 (SKYSHTVNHK…QQAFRCSSDA (116 aa)) is disordered. Polar residues predominate over residues 57-70 (DPLNETHLQTTSGR). K75 participates in a covalent cross-link: Glycyl lysine isopeptide (Lys-Gly) (interchain with G-Cter in SUMO2). A compositionally biased stretch (basic residues) spans 80 to 92 (KKKNLNRSGKRGR). The segment covering 94–107 (SGTTKSAGYRTSTG) has biased composition (polar residues). Phosphoserine is present on S121.

Belongs to the UPF0461 family.

This is UPF0461 protein C5orf24 homolog from Pongo abelii (Sumatran orangutan).